The chain runs to 443 residues: Probable glycine dehydrogenase (decarboxylating) subunit 1 (443 aa).

Belongs to the GcvP family. N-terminal subunit subfamily. As to quaternary structure, the glycine cleavage system is composed of four proteins: P, T, L and H. In this organism, the P 'protein' is a heterodimer of two subunits.

The enzyme catalyses N(6)-[(R)-lipoyl]-L-lysyl-[glycine-cleavage complex H protein] + glycine + H(+) = N(6)-[(R)-S(8)-aminomethyldihydrolipoyl]-L-lysyl-[glycine-cleavage complex H protein] + CO2. In terms of biological role, the glycine cleavage system catalyzes the degradation of glycine. The P protein binds the alpha-amino group of glycine through its pyridoxal phosphate cofactor; CO(2) is released and the remaining methylamine moiety is then transferred to the lipoamide cofactor of the H protein. This is Probable glycine dehydrogenase (decarboxylating) subunit 1 from Nitratidesulfovibrio vulgaris (strain DP4) (Desulfovibrio vulgaris).